The chain runs to 366 residues: Geranylgeranyl pyrophosphate synthase, chloroplastic/chromoplastic (366 aa).

Residues 44–65 (KRTVSSSSSSSLITKEDNNLKS) are disordered. 3 residues coordinate isopentenyl diphosphate: Lys-112, Arg-115, and His-144. Residues Asp-151 and Asp-157 each contribute to the Mg(2+) site. Arg-162 contributes to the dimethylallyl diphosphate binding site. Arg-163 serves as a coordination point for isopentenyl diphosphate. The dimethylallyl diphosphate site is built by Lys-251, Thr-252, Gln-289, Lys-306, and Lys-316.

Belongs to the FPP/GGPP synthase family. In terms of assembly, dimer. Mg(2+) is required as a cofactor.

The protein resides in the plastid. It is found in the chloroplast stroma. Its subcellular location is the chromoplast. It catalyses the reaction isopentenyl diphosphate + dimethylallyl diphosphate = (2E)-geranyl diphosphate + diphosphate. It carries out the reaction isopentenyl diphosphate + (2E)-geranyl diphosphate = (2E,6E)-farnesyl diphosphate + diphosphate. The enzyme catalyses isopentenyl diphosphate + (2E,6E)-farnesyl diphosphate = (2E,6E,10E)-geranylgeranyl diphosphate + diphosphate. Its pathway is isoprenoid biosynthesis; farnesyl diphosphate biosynthesis; farnesyl diphosphate from geranyl diphosphate and isopentenyl diphosphate: step 1/1. It participates in isoprenoid biosynthesis; geranyl diphosphate biosynthesis; geranyl diphosphate from dimethylallyl diphosphate and isopentenyl diphosphate: step 1/1. The protein operates within isoprenoid biosynthesis; geranylgeranyl diphosphate biosynthesis; geranylgeranyl diphosphate from farnesyl diphosphate and isopentenyl diphosphate: step 1/1. Catalyzes the trans-addition of the three molecules of IPP onto DMAPP to form geranylgeranyl pyrophosphate. In Sinapis alba (White mustard), this protein is Geranylgeranyl pyrophosphate synthase, chloroplastic/chromoplastic (GGPS1).